A 34-amino-acid polypeptide reads, in one-letter code: uncharacterized protein (34 aa).

The helical transmembrane segment at 10 to 30 threads the bilayer; it reads LIITSSFFAIAVVLVLSVLLI.

The protein resides in the membrane. This is an uncharacterized protein from Shigella flexneri.